The chain runs to 599 residues: Glycerophosphodiester phosphodiesterase domain-containing protein 5 (599 aa).

Residues 1–42 lie on the Cytoplasmic side of the membrane; the sequence is MVKHQPLQYYEPQLCLSCLTGIYGCRWKRYQRSHDDTTKWER. 2 cysteine pairs are disulfide-bonded: Cys-15–Cys-18 and Cys-25–Cys-576. The chain crosses the membrane as a helical span at residues 43 to 63; it reads LWFLILTSSFFLTLVWFYFWW. The Extracellular segment spans residues 64–87; that stretch reads EVHNDYNEINWFLYNRMGYWSDWS. The helical transmembrane segment at 88–108 threads the bilayer; that stretch reads IPILVTTAAGFTYITVLLILA. Topologically, residues 109–125 are cytoplasmic; that stretch reads LCHIAVGQQMNLHWLHK. The chain crosses the membrane as a helical span at residues 126–146; sequence IGLMTTLITTVVTMSSIAQLW. The Extracellular portion of the chain corresponds to 147 to 160; sequence DDEWEMVFISLQAT. Residues 161–181 traverse the membrane as a helical segment; the sequence is APFLHIGALAAVTALSWLIAG. Residues 182–192 lie on the Cytoplasmic side of the membrane; that stretch reads QFARMEKATSQ. A helical membrane pass occupies residues 193–213; it reads MLMVTAYLAVVVALYLVPLTI. Topologically, residues 214–497 are extracellular; that stretch reads SSPCIMEKKA…IWLMPPDEYR (284 aa). The 258-residue stretch at 228-485 folds into the GP-PDE domain; sequence PAIIGHRGAP…DSSHVLRKVP (258 aa). Asn-301, Asn-336, Asn-352, Asn-374, and Asn-448 each carry an N-linked (GlcNAc...) asparagine glycan. A helical membrane pass occupies residues 498 to 518; the sequence is LIWITSDLISFIIIVGVFIFQ. Residues 519-599 lie on the Cytoplasmic side of the membrane; it reads NYHNDQWRLG…DHRDTRLRMN (81 aa).

Belongs to the glycerophosphoryl diester phosphodiesterase family. As to quaternary structure, interacts with PRDX1; forms a mixed-disulfide with PRDX1, leading to disrupt intramolecular disulfide bond between Cys-25 and Cys-576. In terms of processing, intramolecular disulfide bond between Cys-25 and Cys-576 is reduced by PRDX1. In terms of tissue distribution, detected in mature motor neurons.

The protein localises to the endomembrane system. Its subcellular location is the cytoplasm. The protein resides in the perinuclear region. It localises to the cell projection. It is found in the growth cone. The catalysed reaction is a 1,2-diacyl-sn-glycero-3-phospho-(1D-myo-inositol-4,5-bisphosphate) + H2O = 1D-myo-inositol 1,4,5-trisphosphate + a 1,2-diacyl-sn-glycerol + H(+). The enzyme catalyses sn-glycerol 3-phosphocholine + H2O = sn-glycerol 3-phosphate + choline + H(+). With respect to regulation, activated by PRDX1 by reduction of an intramolecular disulfide bond. In terms of biological role, glycerophosphodiester phosphodiesterase that promotes cell cycle exit and drives spinal motor neuron differentiation. Mediates the cleavage of glycosylphosphatidylinositol (GPI) anchor of target proteins: removes the GPI-anchor of RECK, leading to release RECK from the plasma membrane. May contribute to the osmotic regulation of cellular glycerophosphocholine. The polypeptide is Glycerophosphodiester phosphodiesterase domain-containing protein 5 (GDPD5) (Gallus gallus (Chicken)).